A 529-amino-acid chain; its full sequence is Bifunctional purine biosynthesis protein PurH (529 aa).

In terms of domain architecture, MGS-like spans 1–148 (MQQRRPVRRA…KNHKDVAIVV (148 aa)).

It belongs to the PurH family.

It carries out the reaction (6R)-10-formyltetrahydrofolate + 5-amino-1-(5-phospho-beta-D-ribosyl)imidazole-4-carboxamide = 5-formamido-1-(5-phospho-D-ribosyl)imidazole-4-carboxamide + (6S)-5,6,7,8-tetrahydrofolate. It catalyses the reaction IMP + H2O = 5-formamido-1-(5-phospho-D-ribosyl)imidazole-4-carboxamide. The protein operates within purine metabolism; IMP biosynthesis via de novo pathway; 5-formamido-1-(5-phospho-D-ribosyl)imidazole-4-carboxamide from 5-amino-1-(5-phospho-D-ribosyl)imidazole-4-carboxamide (10-formyl THF route): step 1/1. It participates in purine metabolism; IMP biosynthesis via de novo pathway; IMP from 5-formamido-1-(5-phospho-D-ribosyl)imidazole-4-carboxamide: step 1/1. The protein is Bifunctional purine biosynthesis protein PurH of Salmonella paratyphi B (strain ATCC BAA-1250 / SPB7).